A 698-amino-acid chain; its full sequence is Protein SST2 (698 aa).

The interval Glu10–Thr203 is fungal-DR. Ser252 is modified (phosphoserine). One can recognise a DEP domain in the interval Ser273–Lys358. Phosphoserine is present on Ser408. Residues Lys420–Ser689 form the RGS domain. Ser539 bears the Phosphoserine; by MAPK mark. Residues Phe545 to Leu586 form a disordered region. Residues Asp551–Asp570 show a composition bias toward low complexity. A Phosphoserine modification is found at Ser587.

Post-translationally, phosphorylated by FUS3 and KSS1.

Desensitization to alpha-factor pheromone. Is involved in regulating the signaling pathway for responding to mating pheromone. In Saccharomyces cerevisiae (strain ATCC 204508 / S288c) (Baker's yeast), this protein is Protein SST2 (SST2).